Here is a 197-residue protein sequence, read N- to C-terminus: Ribosome maturation factor RimM (197 aa).

Residues 92-164 (DEGWYEHELV…YILVTPPPGL (73 aa)) enclose the PRC barrel domain. Residues 167 to 197 (INVEDSGETSDAGESGPGEAEPGKAEAGDNA) are disordered. Residues 176 to 186 (SDAGESGPGEA) show a composition bias toward low complexity. Basic and acidic residues predominate over residues 187-197 (EPGKAEAGDNA).

This sequence belongs to the RimM family. Binds ribosomal protein uS19.

The protein localises to the cytoplasm. Its function is as follows. An accessory protein needed during the final step in the assembly of 30S ribosomal subunit, possibly for assembly of the head region. Essential for efficient processing of 16S rRNA. May be needed both before and after RbfA during the maturation of 16S rRNA. It has affinity for free ribosomal 30S subunits but not for 70S ribosomes. The protein is Ribosome maturation factor RimM of Arthrobacter sp. (strain FB24).